The following is a 161-amino-acid chain: SsrA-binding protein (161 aa).

The disordered stretch occupies residues 138–161 (DKRTDSKEKDWNRDKARIMKSSLR). Over residues 139-154 (KRTDSKEKDWNRDKAR) the composition is skewed to basic and acidic residues.

The protein belongs to the SmpB family.

Its subcellular location is the cytoplasm. Required for rescue of stalled ribosomes mediated by trans-translation. Binds to transfer-messenger RNA (tmRNA), required for stable association of tmRNA with ribosomes. tmRNA and SmpB together mimic tRNA shape, replacing the anticodon stem-loop with SmpB. tmRNA is encoded by the ssrA gene; the 2 termini fold to resemble tRNA(Ala) and it encodes a 'tag peptide', a short internal open reading frame. During trans-translation Ala-aminoacylated tmRNA acts like a tRNA, entering the A-site of stalled ribosomes, displacing the stalled mRNA. The ribosome then switches to translate the ORF on the tmRNA; the nascent peptide is terminated with the 'tag peptide' encoded by the tmRNA and targeted for degradation. The ribosome is freed to recommence translation, which seems to be the essential function of trans-translation. This chain is SsrA-binding protein, found in Aliivibrio fischeri (strain MJ11) (Vibrio fischeri).